The chain runs to 216 residues: Dimethylamine corrinoid protein 1 (216 aa).

Positions 1 to 91 (MTSKEELLQE…DMPAGTETKK (91 aa)) constitute a B12-binding N-terminal domain. The 125-residue stretch at 92 to 216 (LGVIVNGTVE…AKAKELLVGK (125 aa)) folds into the B12-binding domain. Position 105 (H105) interacts with methylcob(III)alamin.

It belongs to the methylamine corrinoid protein family.

It participates in one-carbon metabolism; methanogenesis from dimethylamine. Its function is as follows. Acts as a methyl group carrier between MtbB and MtbA. The sequence is that of Dimethylamine corrinoid protein 1 (mtbC1) from Methanosarcina mazei (strain ATCC BAA-159 / DSM 3647 / Goe1 / Go1 / JCM 11833 / OCM 88) (Methanosarcina frisia).